A 302-amino-acid polypeptide reads, in one-letter code: MDQKRLTHLRQLEAESIHIIREVAAEFSNPVMMYSIGKDSSVMLHLARKAFYPGTLPFPLLHVDTGWKFREMYEFRDRTAKAYGCELLVHKNPEGVAMGINPFVHGSGKHTDIMKTEGLKQALNKYGFDAAFGGARRDEEKSRAKERIYSFRDRFHRWDPKNQRPELWHNYNGQINKGESIRVFPLSNWTELDIWQYIYLENIDIVPLYLAAERPVLERDGMLMMIDDDRIDLQPGEEIKNQMVRFRTLGCWPLTGAVESNAQTLPEIIEEMLVSTTSERQGRVIDRDQAGSMELKKRQGYF.

Belongs to the PAPS reductase family. CysD subfamily. Heterodimer composed of CysD, the smaller subunit, and CysN.

It catalyses the reaction sulfate + ATP + H(+) = adenosine 5'-phosphosulfate + diphosphate. It participates in sulfur metabolism; hydrogen sulfide biosynthesis; sulfite from sulfate: step 1/3. Functionally, with CysN forms the ATP sulfurylase (ATPS) that catalyzes the adenylation of sulfate producing adenosine 5'-phosphosulfate (APS) and diphosphate, the first enzymatic step in sulfur assimilation pathway. APS synthesis involves the formation of a high-energy phosphoric-sulfuric acid anhydride bond driven by GTP hydrolysis by CysN coupled to ATP hydrolysis by CysD. This Enterobacter sp. (strain 638) protein is Sulfate adenylyltransferase subunit 2.